We begin with the raw amino-acid sequence, 231 residues long: Large ribosomal subunit protein uL1 (231 aa).

Belongs to the universal ribosomal protein uL1 family. As to quaternary structure, part of the 50S ribosomal subunit.

In terms of biological role, binds directly to 23S rRNA. The L1 stalk is quite mobile in the ribosome, and is involved in E site tRNA release. Functionally, protein L1 is also a translational repressor protein, it controls the translation of the L11 operon by binding to its mRNA. This Clostridium kluyveri (strain NBRC 12016) protein is Large ribosomal subunit protein uL1.